Reading from the N-terminus, the 179-residue chain is Large ribosomal subunit protein uL5 (179 aa).

It belongs to the universal ribosomal protein uL5 family. As to quaternary structure, part of the 50S ribosomal subunit; part of the 5S rRNA/L5/L18/L25 subcomplex. Contacts the 5S rRNA and the P site tRNA. Forms a bridge to the 30S subunit in the 70S ribosome.

In terms of biological role, this is one of the proteins that bind and probably mediate the attachment of the 5S RNA into the large ribosomal subunit, where it forms part of the central protuberance. In the 70S ribosome it contacts protein S13 of the 30S subunit (bridge B1b), connecting the 2 subunits; this bridge is implicated in subunit movement. Contacts the P site tRNA; the 5S rRNA and some of its associated proteins might help stabilize positioning of ribosome-bound tRNAs. This is Large ribosomal subunit protein uL5 from Buchnera aphidicola subsp. Cinara cedri (strain Cc).